Consider the following 322-residue polypeptide: Cysteine protease YopT (322 aa).

Active-site residues include C139, H258, and D274.

Belongs to the peptidase C58 family. As to quaternary structure, interacts with human ARHA.

Its subcellular location is the secreted. Its function is as follows. Cysteine protease, which is translocated into infected cells and plays a central role in pathogenesis by cleaving the C-terminus end of the human small GTPase RhoA/ARHA, a regulator of cytoskeleton. Once cleaved, ARHA loses its lipid modification, and is released from the cell membrane, leading to the subsequent disruption of actin cytoskeleton of the host cell. The polypeptide is Cysteine protease YopT (yopT) (Yersinia pestis).